Reading from the N-terminus, the 451-residue chain is Trigger factor (451 aa).

A PPIase FKBP-type domain is found at G173–P258.

It belongs to the FKBP-type PPIase family. Tig subfamily.

It localises to the cytoplasm. The catalysed reaction is [protein]-peptidylproline (omega=180) = [protein]-peptidylproline (omega=0). Functionally, involved in protein export. Acts as a chaperone by maintaining the newly synthesized protein in an open conformation. Functions as a peptidyl-prolyl cis-trans isomerase. The sequence is that of Trigger factor from Cupriavidus pinatubonensis (strain JMP 134 / LMG 1197) (Cupriavidus necator (strain JMP 134)).